We begin with the raw amino-acid sequence, 578 residues long: GTP diphosphokinase CRSH3, chloroplastic (578 aa).

A chloroplast-targeting transit peptide spans 1 to 45 (MANAGVNETVAVAVAIDAPGVGHDHGAAGEVRRPSTRRLAPAGSG). In terms of domain architecture, HD spans 99 to 199 (SVSRALVVAA…LELAVKLDAM (101 aa)). EF-hand domains lie at 468 to 503 (ATAGNVERAFQLLDKNGDGRISMEELTEIMEDLGAG) and 506 to 537 (DAEELMRLLDANSDGSLSSDEFALFQKRVKLK). Aspartate 481, asparagine 483, aspartate 485, arginine 487, glutamate 492, aspartate 515, asparagine 517, aspartate 519, serine 521, and glutamate 526 together coordinate Ca(2+).

The protein belongs to the RelA/SpoT family. In terms of tissue distribution, expressed in roots and shoots.

The protein resides in the plastid. Its subcellular location is the chloroplast. It carries out the reaction GTP + ATP = guanosine 3'-diphosphate 5'-triphosphate + AMP. Its activity is regulated as follows. Activated by calcium. Possesses calcium-dependent ppGpp (guanosine 3'-diphosphate 5'-diphosphate) synthetase activity in vitro and is able to functionally complement E.coli relA mutants. May be involved in a rapid plant ppGpp-mediated response to pathogens and other stresses. The polypeptide is GTP diphosphokinase CRSH3, chloroplastic (Oryza sativa subsp. japonica (Rice)).